The sequence spans 255 residues: 1-(5-phosphoribosyl)-5-[(5-phosphoribosylamino)methylideneamino] imidazole-4-carboxamide isomerase (255 aa).

Asp-8 functions as the Proton acceptor in the catalytic mechanism. The active-site Proton donor is Asp-129.

This sequence belongs to the HisA/HisF family.

It localises to the cytoplasm. The catalysed reaction is 1-(5-phospho-beta-D-ribosyl)-5-[(5-phospho-beta-D-ribosylamino)methylideneamino]imidazole-4-carboxamide = 5-[(5-phospho-1-deoxy-D-ribulos-1-ylimino)methylamino]-1-(5-phospho-beta-D-ribosyl)imidazole-4-carboxamide. It participates in amino-acid biosynthesis; L-histidine biosynthesis; L-histidine from 5-phospho-alpha-D-ribose 1-diphosphate: step 4/9. This Prochlorococcus marinus (strain MIT 9211) protein is 1-(5-phosphoribosyl)-5-[(5-phosphoribosylamino)methylideneamino] imidazole-4-carboxamide isomerase.